Reading from the N-terminus, the 141-residue chain is Hemoglobin subunit alpha-1 (141 aa).

Residues 1–141 form the Globin domain; that stretch reads VLTEDDKNHI…VAKTLVAHYR (141 aa). His58 serves as a coordination point for O2. A heme b-binding site is contributed by His87.

Belongs to the globin family. As to quaternary structure, heterotetramer of two alpha chains and two beta chains. As to expression, red blood cells.

Involved in oxygen transport from the lung to the various peripheral tissues. The polypeptide is Hemoglobin subunit alpha-1 (Iguana iguana (Common iguana)).